The following is an 82-amino-acid chain: uncharacterized protein (82 aa).

The interval 60–82 (YKRRRPDHMMKRNSPSYTGDHKT) is disordered.

This is an uncharacterized protein from Saccharomyces cerevisiae (strain ATCC 204508 / S288c) (Baker's yeast).